The following is a 443-amino-acid chain: Thymidine phosphorylase (443 aa).

This sequence belongs to the thymidine/pyrimidine-nucleoside phosphorylase family. As to quaternary structure, homodimer.

The enzyme catalyses thymidine + phosphate = 2-deoxy-alpha-D-ribose 1-phosphate + thymine. The protein operates within pyrimidine metabolism; dTMP biosynthesis via salvage pathway; dTMP from thymine: step 1/2. Functionally, the enzymes which catalyze the reversible phosphorolysis of pyrimidine nucleosides are involved in the degradation of these compounds and in their utilization as carbon and energy sources, or in the rescue of pyrimidine bases for nucleotide synthesis. This is Thymidine phosphorylase from Aliivibrio fischeri (strain ATCC 700601 / ES114) (Vibrio fischeri).